The sequence spans 190 residues: Ras-like GTP-binding protein RhoL (190 aa).

Position 18–25 (18–25) interacts with GTP; that stretch reads GDGMVGKT. Residues 40 to 48 carry the Effector region motif; it reads YIPTVFDNH. GTP contacts are provided by residues 65–69 and 123–126; these read DTAGQ and TKLD. Cys187 is subject to Cysteine methyl ester. The S-geranylgeranyl cysteine moiety is linked to residue Cys187. A propeptide spans 188-190 (removed in mature form); that stretch reads KIL.

The protein belongs to the small GTPase superfamily. Rho family. In terms of tissue distribution, highly expressed in the embryonic cephalic mesoderm starting from stage 6 and fading by stage 11. Hemocyte precursor cells.

It localises to the cell membrane. Essential for the maturation of hemocytes. This chain is Ras-like GTP-binding protein RhoL (RhoL), found in Drosophila melanogaster (Fruit fly).